A 245-amino-acid polypeptide reads, in one-letter code: Tetraspanin-6 (245 aa).

Residues 1 to 19 (MASPSRRLQTKPVITCLKS) are Cytoplasmic-facing. The chain crosses the membrane as a helical span at residues 20–40 (VLLIYTFIFWITGVILLAVGI). The Extracellular portion of the chain corresponds to 41 to 59 (WGKVSLENYFSLLNEKATN). Residues 60–80 (VPFVLIGTGTVIILLGTFGCF) form a helical membrane-spanning segment. The Cytoplasmic segment spans residues 81-93 (ATCRTSAWMLKLY). Residues 94 to 114 (AMFLTLIFLVELVAAIVGFVF) form a helical membrane-spanning segment. Residues 115–208 (RHEIKNSFKS…IKVMTTIESE (94 aa)) lie on the Extracellular side of the membrane. N-linked (GlcNAc...) asparagine glycosylation occurs at Asn-134. The chain crosses the membrane as a helical span at residues 209-229 (MGVVAGISFGVACFQLIGIFL). Residues 230 to 245 (AYCLSRAITNNQYEIV) lie on the Cytoplasmic side of the membrane.

The protein belongs to the tetraspanin (TM4SF) family.

The protein resides in the membrane. This Mus musculus (Mouse) protein is Tetraspanin-6 (Tspan6).